A 417-amino-acid polypeptide reads, in one-letter code: MSENLIIFNAKVVTPLGFSARKGKEMAELRILEKATVEVVDGIITYVGPNRGEVRDGYYHHFWHYNARGKCLLPGFVDSHTHFVFGGERAEEFSWRLKGESYMSIMQRGGGIASTVQATRELSFIHLRSKAEGLLKKMTAMGITTVEGKSGYGLNRETELLQLKVMRSLNKDEGVRVDIVPTFLGAHALPDEYRERPDDYIDFLIRELLPVIQRDSLAEFCDVFCEEGVFSIEQSRRLLTAAGDYGLLPKLHADEIVPLGGAELAAELGAVSADHLLHASDAGIEAMARKGVVATLLPLTAFALKEPYARGRDMIDAGCAVALATDLNPGSCFSGSIPLTFALACIHMQLTVEEAITALTLNGAAALNRADSIGSIEVGKKGDFVVLDSDNYHILPYYVGMNCVNTTIKGGMLYPSV.

Fe(3+)-binding residues include H80 and H82. Residues H80 and H82 each contribute to the Zn(2+) site. The 4-imidazolone-5-propanoate site is built by R89, Y152, and H187. An N-formimidoyl-L-glutamate-binding site is contributed by Y152. H252 serves as a coordination point for Fe(3+). H252 is a binding site for Zn(2+). 4-imidazolone-5-propanoate is bound at residue E255. D326 provides a ligand contact to Fe(3+). D326 contributes to the Zn(2+) binding site. Residues N328 and G330 each contribute to the N-formimidoyl-L-glutamate site. S331 lines the 4-imidazolone-5-propanoate pocket.

It belongs to the metallo-dependent hydrolases superfamily. HutI family. The cofactor is Zn(2+). Fe(3+) is required as a cofactor.

The protein resides in the cytoplasm. The enzyme catalyses 4-imidazolone-5-propanoate + H2O = N-formimidoyl-L-glutamate. It functions in the pathway amino-acid degradation; L-histidine degradation into L-glutamate; N-formimidoyl-L-glutamate from L-histidine: step 3/3. Its function is as follows. Catalyzes the hydrolytic cleavage of the carbon-nitrogen bond in imidazolone-5-propanoate to yield N-formimidoyl-L-glutamate. It is the third step in the universal histidine degradation pathway. The sequence is that of Imidazolonepropionase from Bacteroides fragilis (strain YCH46).